Here is a 74-residue protein sequence, read N- to C-terminus: Protein krueppel (74 aa).

4 C2H2-type zinc fingers span residues 1–4, 10–32, 38–60, and 66–74; these read ERTH, FECP…MRLH, YHCS…LRVH, and YACELCAAK.

Belongs to the krueppel C2H2-type zinc-finger protein family.

It localises to the nucleus. In terms of biological role, krueppel is a gap class segmentation protein. The chain is Protein krueppel (Kr) from Apis mellifera (Honeybee).